The following is a 708-amino-acid chain: Ubiquitin thioesterase Zranb1 (708 aa).

Residues 3–33 form a RanBP2-type 1 zinc finger; that stretch reads EHGIKWACEYCTYENWPSAIKCTMCRAQRPS. The Zn(2+) site is built by cysteine 10, cysteine 13, cysteine 24, and cysteine 27. Residues 38–73 are disordered; that stretch reads TEDPFKSGSSDVGRDWDPSSTEGGSSPLICPDSSAR. RanBP2-type zinc fingers lie at residues 84–113 and 149–178; these read NANK…QRRT and RTQH…PRPN. Zn(2+) is bound by residues cysteine 90, cysteine 93, cysteine 104, cysteine 107, cysteine 155, cysteine 158, cysteine 169, and cysteine 172. The tract at residues 202–224 is disordered; it reads RWRGGCSSGNSQRRSPPTTKRDS. A compositionally biased stretch (polar residues) spans 209–219; the sequence is SGNSQRRSPPT. ANK repeat units follow at residues 260 to 290 and 313 to 340; these read KKTD…SGGD and YTLV…QQAA. An OTU domain is found at 432–592; the sequence is LYALWNRTAG…RGHFSALVAM (161 aa). The Nucleophile role is filled by cysteine 443. Histidine 585 (proton acceptor) is an active-site residue.

This sequence belongs to the peptidase C64 family. Interacts with TRAF6. Interacts with APC.

It localises to the cytoplasm. It is found in the nucleus. It catalyses the reaction Thiol-dependent hydrolysis of ester, thioester, amide, peptide and isopeptide bonds formed by the C-terminal Gly of ubiquitin (a 76-residue protein attached to proteins as an intracellular targeting signal).. Ubiquitin thioesterase, which specifically hydrolyzes 'Lys-29'-linked and 'Lys-33'-linked diubiquitin. Also cleaves 'Lys-63'-linked chains, but with 40-fold less efficiency compared to 'Lys-29'-linked ones. Positive regulator of the Wnt signaling pathway that deubiquitinates APC protein, a negative regulator of Wnt-mediated transcription. Acts as a regulator of autophagy by mediating deubiquitination of PIK3C3/VPS34, thereby promoting autophagosome maturation. Plays a role in the regulation of cell morphology and cytoskeletal organization. Required in the stress fiber dynamics and cell migration. This Mus musculus (Mouse) protein is Ubiquitin thioesterase Zranb1.